The chain runs to 284 residues: NAD/NADP-dependent indole-3-acetaldehyde reductase (284 aa).

Asp-49 serves as a coordination point for NADPH. Residues Tyr-54 and His-109 each act as proton donor in the active site. 10 residues coordinate NADPH: Ser-143, Gln-165, Leu-196, Arg-201, Thr-239, Thr-240, Thr-241, Ser-242, Lys-243, and Arg-246.

It belongs to the aldo/keto reductase family. Monomer.

It is found in the cytoplasm. It localises to the nucleus. The catalysed reaction is indole-3-ethanol + NAD(+) = indole-3-acetaldehyde + NADH + H(+). It carries out the reaction indole-3-ethanol + NADP(+) = indole-3-acetaldehyde + NADPH + H(+). This is NAD/NADP-dependent indole-3-acetaldehyde reductase from Schizosaccharomyces pombe (strain 972 / ATCC 24843) (Fission yeast).